The sequence spans 138 residues: Phosphoribosyl-AMP cyclohydrolase (138 aa).

D84 serves as a coordination point for Mg(2+). A Zn(2+)-binding site is contributed by C85. 2 residues coordinate Mg(2+): D86 and D88. The Zn(2+) site is built by C102 and C109.

It belongs to the PRA-CH family. In terms of assembly, homodimer. Mg(2+) serves as cofactor. The cofactor is Zn(2+).

It is found in the cytoplasm. It carries out the reaction 1-(5-phospho-beta-D-ribosyl)-5'-AMP + H2O = 1-(5-phospho-beta-D-ribosyl)-5-[(5-phospho-beta-D-ribosylamino)methylideneamino]imidazole-4-carboxamide. Its pathway is amino-acid biosynthesis; L-histidine biosynthesis; L-histidine from 5-phospho-alpha-D-ribose 1-diphosphate: step 3/9. Its function is as follows. Catalyzes the hydrolysis of the adenine ring of phosphoribosyl-AMP. The chain is Phosphoribosyl-AMP cyclohydrolase from Burkholderia cenocepacia (strain ATCC BAA-245 / DSM 16553 / LMG 16656 / NCTC 13227 / J2315 / CF5610) (Burkholderia cepacia (strain J2315)).